The following is a 377-amino-acid chain: N-acetylgalactosamine-6-phosphate deacetylase (377 aa).

E125 is an a divalent metal cation binding site. Residue 136 to 137 (AH) coordinates substrate. The a divalent metal cation site is built by H191 and H212. Substrate-binding positions include 215–216 (NG), R223, and 244–247 (DGHH). Residue D269 is the Proton donor/acceptor of the active site. 302–304 (LAG) contacts substrate.

This sequence belongs to the metallo-dependent hydrolases superfamily. NagA family. The cofactor is a divalent metal cation.

It catalyses the reaction N-acetyl-D-galactosamine 6-phosphate + H2O = D-galactosamine 6-phosphate + acetate. Catalyzes the deacetylation of N-acetyl-D-galactosamine 6-phosphate to D-galactosamine 6-phosphate. Can probably also catalyze the deacetylation of N-acetyl-D-glucosamine 6-phosphate to D-glucosamine 6-phosphate. The polypeptide is N-acetylgalactosamine-6-phosphate deacetylase (agaA) (Escherichia coli O157:H7).